A 194-amino-acid polypeptide reads, in one-letter code: Thymidine kinase (194 aa).

Residues 15-22 (GSMFSGKS) and 88-91 (DEVQ) contribute to the ATP site. The active-site Proton acceptor is Glu89. Zn(2+) is bound by residues Cys145, Cys148, Cys183, and Cys186.

It belongs to the thymidine kinase family. As to quaternary structure, homotetramer.

It localises to the cytoplasm. It catalyses the reaction thymidine + ATP = dTMP + ADP + H(+). This Bacillus cereus (strain AH820) protein is Thymidine kinase.